A 305-amino-acid chain; its full sequence is NAD kinase (305 aa).

Catalysis depends on D82, which acts as the Proton acceptor. NAD(+) is bound by residues 82–83, 156–157, R184, D186, 197–202, A221, and Q255; these read DG, ND, and TAYALS.

It belongs to the NAD kinase family. A divalent metal cation serves as cofactor.

Its subcellular location is the cytoplasm. It catalyses the reaction NAD(+) + ATP = ADP + NADP(+) + H(+). Functionally, involved in the regulation of the intracellular balance of NAD and NADP, and is a key enzyme in the biosynthesis of NADP. Catalyzes specifically the phosphorylation on 2'-hydroxyl of the adenosine moiety of NAD to yield NADP. This chain is NAD kinase, found in Cupriavidus pinatubonensis (strain JMP 134 / LMG 1197) (Cupriavidus necator (strain JMP 134)).